The sequence spans 1019 residues: StAR-related lipid transfer protein 8 (1019 aa).

Disordered stretches follow at residues Q92–K122 and S134–T154. Over residues S100–G115 the composition is skewed to polar residues. At S108 the chain carries Phosphoserine. Residues S134 to E147 show a composition bias toward basic and acidic residues. The residue at position 168 (R168) is an Asymmetric dimethylarginine. 2 positions are modified to phosphoserine: S234 and S237. Disordered regions lie at residues M325–T355 and A406–S482. Residues K334–A347 show a composition bias toward acidic residues. 2 stretches are compositionally biased toward polar residues: residues N418–S430 and I437–N455. S494 and S502 each carry phosphoserine. The Rho-GAP domain occupies P569–F773. A disordered region spans residues D731–E754. The START domain occupies A805 to A1013.

As to quaternary structure, binds both the SH2 and PTB domains of TNS1.

The protein localises to the cell junction. The protein resides in the focal adhesion. Functionally, accelerates GTPase activity of RHOA and CDC42, but not RAC1. Stimulates the hydrolysis of phosphatidylinositol 4,5-bisphosphate by PLCD1. In Mus musculus (Mouse), this protein is StAR-related lipid transfer protein 8 (Stard8).